A 76-amino-acid polypeptide reads, in one-letter code: MALLDDVKAVVVEQLDCDPAEVKEDSKFIEDLGADSLDVVELVMALEEKFDIEIPDEDAEKILTVADAIKYIENNA.

In terms of domain architecture, Carrier spans 1–76 (MALLDDVKAV…DAIKYIENNA (76 aa)). Ser36 is subject to O-(pantetheine 4'-phosphoryl)serine.

The protein belongs to the acyl carrier protein (ACP) family. Post-translationally, 4'-phosphopantetheine is transferred from CoA to a specific serine of apo-ACP by AcpS. This modification is essential for activity because fatty acids are bound in thioester linkage to the sulfhydryl of the prosthetic group.

Its subcellular location is the cytoplasm. Its pathway is lipid metabolism; fatty acid biosynthesis. Carrier of the growing fatty acid chain in fatty acid biosynthesis. This chain is Acyl carrier protein, found in Aliarcobacter butzleri (strain RM4018) (Arcobacter butzleri).